Here is an 841-residue protein sequence, read N- to C-terminus: Probable outer membrane usher protein EcpC (841 aa).

A signal peptide spans 1–29 (MPLRRFSPGLKAQFAFGMVFLFVQPDASA).

It belongs to the EcpC/MatD family.

In terms of biological role, part of the ecpRABCDE operon, which encodes the E.coli common pilus (ECP). ECP is found in both commensal and pathogenic strains and plays a dual role in early-stage biofilm development and host cell recognition. The protein is Probable outer membrane usher protein EcpC (ecpC) of Escherichia coli O157:H7.